Here is a 36-residue protein sequence, read N- to C-terminus: MSASFLPSILTPVVTLVFPGLMFALFFVLIEQEEIA.

Residues 9-29 traverse the membrane as a helical segment; that stretch reads ILTPVVTLVFPGLMFALFFVL.

This sequence belongs to the PsaI family.

It is found in the plastid. Its subcellular location is the chloroplast thylakoid membrane. Its function is as follows. May help in the organization of the PsaL subunit. The sequence is that of Photosystem I reaction center subunit VIII from Emiliania huxleyi (Coccolithophore).